The chain runs to 160 residues: MKVCSIVVVILAVLLIAKLDAKIYERCELAKKLEEAGLDGFKGYTVGDWLCVAHYESGFDTSFVDHNPDGSSEYGIFQLNSAWWCNNGITPTQNLCNIDCNDLLNRHILDDIICAKRVASSHKSMKAWDSWTQHCAGHDLSEWLKGCSVRLKTDSSYNNW.

Positions Met-1–Ala-21 are cleaved as a signal peptide. The region spanning Lys-22–Arg-150 is the C-type lysozyme domain. 4 disulfides stabilise this stretch: Cys-27/Cys-147, Cys-51/Cys-135, Cys-85/Cys-100, and Cys-96/Cys-114. Glu-56 is a catalytic residue.

The protein belongs to the glycosyl hydrolase 22 family.

Its subcellular location is the secreted. It catalyses the reaction Hydrolysis of (1-&gt;4)-beta-linkages between N-acetylmuramic acid and N-acetyl-D-glucosamine residues in a peptidoglycan and between N-acetyl-D-glucosamine residues in chitodextrins.. This chain is Sperm acrosome-associated protein 5 (Spaca5), found in Mus musculus (Mouse).